The primary structure comprises 975 residues: Macrophage colony-stimulating factor 1 receptor 1 (975 aa).

An N-terminal signal peptide occupies residues 1–17 (MQSFLPLLMGIMASASS). Topologically, residues 18-519 (VEWRHPVIWF…VEVSDKLFTS (502 aa)) are extracellular. Ig-like C2-type domains are found at residues 34-113 (SSEV…VYVK), 125-208 (SLRV…INVI), 221-310 (MDEY…LLVV), 329-407 (GLSV…FHVK), and 404-513 (FHVK…VEVS). Cystine bridges form between C49–C93, C140–C189, and C236–C292. 9 N-linked (GlcNAc...) asparagine glycosylation sites follow: N156, N165, N246, N250, N289, N301, N399, N420, and N451. C426 and C495 form a disulfide bridge. The helical transmembrane segment at 520–540 (TLIGAAGVLAIFLLLLVFLLY) threads the bilayer. Topologically, residues 541 to 975 (KYKQKPRFEI…LMKTNNYQFC (435 aa)) are cytoplasmic. The regulatory juxtamembrane domain stretch occupies residues 544-576 (QKPRFEIRWKIIEAREGNNYTFIDPTQLPYNEK). The residue at position 563 (Y563) is a Phosphotyrosine; by autocatalysis. In terms of domain architecture, Protein kinase spans 584–918 (LKLGKVLGAG…MISQMINRLL (335 aa)). Residues 590–598 (LGAGAFGKV) and K619 contribute to the ATP site. Residues Y702 and Y726 each carry the phosphotyrosine; by autocatalysis modification. Catalysis depends on D782, which acts as the Proton acceptor. Positions 800–822 (DFGLARDIMNDSNYVVKGNARLP) are activation loop. Phosphotyrosine; by autocatalysis occurs at positions 813 and 929. A disordered region spans residues 939 to 963 (EGEACDEPKRYDPPCERSCDHEEEE). The span at 944–958 (DEPKRYDPPCERSCD) shows a compositional bias: basic and acidic residues. Position 972 is a phosphotyrosine; by autocatalysis (Y972).

The protein belongs to the protein kinase superfamily. Tyr protein kinase family. CSF-1/PDGF receptor subfamily. As to quaternary structure, monomer. Homodimer. Interacts with CSF1. Autophosphorylated in response to CSF1 binding. autophosphorylation, leading to its degradation. Post-translationally, ubiquitinated. Becomes rapidly polyubiquitinated after autophosphorylation, leading to its degradation.

The protein localises to the cell membrane. The catalysed reaction is L-tyrosyl-[protein] + ATP = O-phospho-L-tyrosyl-[protein] + ADP + H(+). With respect to regulation, present in an inactive conformation in the absence of bound ligand. CSF1 binding leads to dimerization and activation by autophosphorylation on tyrosine residues. Its function is as follows. Tyrosine-protein kinase that acts as a cell-surface receptor for CSF1 and plays an essential role in the regulation of survival, proliferation and differentiation of hematopoietic precursor cells, especially mononuclear phagocytes, such as macrophages and monocytes. Plays an important role in innate immunity and in inflammatory processes. Plays an important role in the regulation of osteoclast proliferation and differentiation, the regulation of bone resorption, and is required for normal bone development. Promotes reorganization of the actin cytoskeleton, regulates formation of membrane ruffles, cell adhesion and cell migration. Activates several signaling pathways in response to ligand binding. This is Macrophage colony-stimulating factor 1 receptor 1 (csf1r1) from Takifugu rubripes (Japanese pufferfish).